The following is a 140-amino-acid chain: Tail assembly protein G (140 aa).

A disordered region spans residues isoleucine 114–serine 140.

Belongs to the lambda-like tail assembly protein family. In terms of assembly, interacts with the tail assembly protein GT and the tape measure protein.

It localises to the host cytoplasm. Functionally, promotes tail assembly by creating a scaffold for the tail tube proteins. Tail assembly proteins G and GT probably wrap the linear tape measure protein to create a tail assembly scaffold. This allows the polymerization of the tail tube protein, during which G and GT are released, therefore they are absent in the mature virion. The tail assembly protein GT is produced by a rare -1 ribosomal frameshift. The ratio of translated G/GT is about 20, and this ratio is important for proper tail assembly. The polypeptide is Tail assembly protein G (Escherichia coli (Bacteriophage N15)).